We begin with the raw amino-acid sequence, 92 residues long: Small integral membrane protein 12 (92 aa).

A helical transmembrane segment spans residues 15-34 (YVTFPVAFVVGAVGYHLEWF).

This sequence belongs to the SMIM12 family.

It localises to the membrane. The sequence is that of Small integral membrane protein 12 (Smim12) from Mus musculus (Mouse).